The sequence spans 393 residues: Formate-dependent phosphoribosylglycinamide formyltransferase (393 aa).

N(1)-(5-phospho-beta-D-ribosyl)glycinamide is bound by residues 20–21 (EL) and Glu80. ATP-binding positions include Arg112, Lys153, 158–163 (SSGKGQ), 193–196 (EAFI), and Glu201. The ATP-grasp domain maps to 117 to 306 (RLAAEDLNLP…EFELHVRAVL (190 aa)). Mg(2+)-binding residues include Glu265 and Glu277. N(1)-(5-phospho-beta-D-ribosyl)glycinamide-binding positions include Asp284, Lys354, and 361–362 (RR).

The protein belongs to the PurK/PurT family. Homodimer.

It carries out the reaction N(1)-(5-phospho-beta-D-ribosyl)glycinamide + formate + ATP = N(2)-formyl-N(1)-(5-phospho-beta-D-ribosyl)glycinamide + ADP + phosphate + H(+). It functions in the pathway purine metabolism; IMP biosynthesis via de novo pathway; N(2)-formyl-N(1)-(5-phospho-D-ribosyl)glycinamide from N(1)-(5-phospho-D-ribosyl)glycinamide (formate route): step 1/1. Its function is as follows. Involved in the de novo purine biosynthesis. Catalyzes the transfer of formate to 5-phospho-ribosyl-glycinamide (GAR), producing 5-phospho-ribosyl-N-formylglycinamide (FGAR). Formate is provided by PurU via hydrolysis of 10-formyl-tetrahydrofolate. In Syntrophotalea carbinolica (strain DSM 2380 / NBRC 103641 / GraBd1) (Pelobacter carbinolicus), this protein is Formate-dependent phosphoribosylglycinamide formyltransferase.